A 561-amino-acid polypeptide reads, in one-letter code: Oxygen-dependent choline dehydrogenase (561 aa).

7 to 36 (DYIIVGAGSAGNVLASRLTEDADVTVLLLE) provides a ligand contact to FAD. H474 serves as the catalytic Proton acceptor.

Belongs to the GMC oxidoreductase family. It depends on FAD as a cofactor.

It catalyses the reaction choline + A = betaine aldehyde + AH2. The enzyme catalyses betaine aldehyde + NAD(+) + H2O = glycine betaine + NADH + 2 H(+). The protein operates within amine and polyamine biosynthesis; betaine biosynthesis via choline pathway; betaine aldehyde from choline (cytochrome c reductase route): step 1/1. Its function is as follows. Involved in the biosynthesis of the osmoprotectant glycine betaine. Catalyzes the oxidation of choline to betaine aldehyde and betaine aldehyde to glycine betaine at the same rate. This Paraburkholderia phytofirmans (strain DSM 17436 / LMG 22146 / PsJN) (Burkholderia phytofirmans) protein is Oxygen-dependent choline dehydrogenase.